Reading from the N-terminus, the 116-residue chain is Beta-2-microglobulin (116 aa).

Residues 1 to 19 (MRAIITFALFCVLYVTVQG) form the signal peptide. The Ig-like C1-type domain maps to 24-110 (PKVQVYSHFP…VRHMNNKNIY (87 aa)). Cys44 and Cys99 are joined by a disulfide.

Belongs to the beta-2-microglobulin family. As to quaternary structure, heterodimer of an alpha chain and a beta chain. Beta-2-microglobulin is the beta-chain of major histocompatibility complex class I molecules.

Its subcellular location is the secreted. In terms of biological role, component of the class I major histocompatibility complex (MHC). Involved in the presentation of peptide antigens to the immune system. This chain is Beta-2-microglobulin (b2m), found in Cyprinus carpio (Common carp).